The chain runs to 140 residues: MAIERTFSMIKPDATKRNLTGAITKMLEDAGLRVVASKRVWMSRREAEGFYAVHKERPFFGELVEFMSSGPTVVQVLEGENAIAKNREVMGATNPANAAEGTIRKVHALSIGENSVHGSDAPETAAEEIAYWFSGTEIVG.

ATP is bound by residues K11, F59, R87, T93, R104, and N114. The active-site Pros-phosphohistidine intermediate is the H117.

The protein belongs to the NDK family. In terms of assembly, homotetramer. Mg(2+) serves as cofactor.

Its subcellular location is the cytoplasm. The enzyme catalyses a 2'-deoxyribonucleoside 5'-diphosphate + ATP = a 2'-deoxyribonucleoside 5'-triphosphate + ADP. The catalysed reaction is a ribonucleoside 5'-diphosphate + ATP = a ribonucleoside 5'-triphosphate + ADP. Its function is as follows. Major role in the synthesis of nucleoside triphosphates other than ATP. The ATP gamma phosphate is transferred to the NDP beta phosphate via a ping-pong mechanism, using a phosphorylated active-site intermediate. The polypeptide is Nucleoside diphosphate kinase (Rhizobium meliloti (strain 1021) (Ensifer meliloti)).